The primary structure comprises 309 residues: Probable manganese-dependent inorganic pyrophosphatase (309 aa).

Mn(2+)-binding residues include His9, Asp13, Asp15, Asp75, His97, and Asp149.

Belongs to the PPase class C family. Requires Mn(2+) as cofactor.

The protein localises to the cytoplasm. The enzyme catalyses diphosphate + H2O = 2 phosphate + H(+). This Bacillus cereus (strain B4264) protein is Probable manganese-dependent inorganic pyrophosphatase.